The sequence spans 181 residues: ATP-dependent protease subunit HslV (181 aa).

Thr7 is a catalytic residue. Ala162, Cys165, and Thr168 together coordinate Na(+).

This sequence belongs to the peptidase T1B family. HslV subfamily. In terms of assembly, a double ring-shaped homohexamer of HslV is capped on each side by a ring-shaped HslU homohexamer. The assembly of the HslU/HslV complex is dependent on binding of ATP.

It is found in the cytoplasm. It catalyses the reaction ATP-dependent cleavage of peptide bonds with broad specificity.. With respect to regulation, allosterically activated by HslU binding. Functionally, protease subunit of a proteasome-like degradation complex believed to be a general protein degrading machinery. The chain is ATP-dependent protease subunit HslV from Coxiella burnetii (strain RSA 331 / Henzerling II).